Consider the following 555-residue polypeptide: 2-succinyl-5-enolpyruvyl-6-hydroxy-3-cyclohexene-1-carboxylate synthase (555 aa).

Belongs to the TPP enzyme family. MenD subfamily. In terms of assembly, homodimer. The cofactor is Mg(2+). It depends on Mn(2+) as a cofactor. Requires thiamine diphosphate as cofactor.

It carries out the reaction isochorismate + 2-oxoglutarate + H(+) = 5-enolpyruvoyl-6-hydroxy-2-succinyl-cyclohex-3-ene-1-carboxylate + CO2. It participates in quinol/quinone metabolism; 1,4-dihydroxy-2-naphthoate biosynthesis; 1,4-dihydroxy-2-naphthoate from chorismate: step 2/7. It functions in the pathway quinol/quinone metabolism; menaquinone biosynthesis. Catalyzes the thiamine diphosphate-dependent decarboxylation of 2-oxoglutarate and the subsequent addition of the resulting succinic semialdehyde-thiamine pyrophosphate anion to isochorismate to yield 2-succinyl-5-enolpyruvyl-6-hydroxy-3-cyclohexene-1-carboxylate (SEPHCHC). The chain is 2-succinyl-5-enolpyruvyl-6-hydroxy-3-cyclohexene-1-carboxylate synthase from Bacteroides fragilis (strain ATCC 25285 / DSM 2151 / CCUG 4856 / JCM 11019 / LMG 10263 / NCTC 9343 / Onslow / VPI 2553 / EN-2).